The primary structure comprises 299 residues: Protease HtpX homolog (299 aa).

The next 2 membrane-spanning stretches (helical) occupy residues 15–35 and 39–59; these read ILLLVFFLLLALVGYAVGYLF and GLGGLVIALIIGFIYALSMIF. H143 contacts Zn(2+). Residue E144 is part of the active site. H147 serves as a coordination point for Zn(2+). The next 2 helical transmembrane spans lie at 158–178 and 198–218; these read IAVALASAITMLSGMAGRMMW and IIMLVVSLLAIVLAPLAATLV. E227 lines the Zn(2+) pocket.

This sequence belongs to the peptidase M48B family. Requires Zn(2+) as cofactor.

The protein resides in the cell membrane. This Streptococcus pneumoniae (strain P1031) protein is Protease HtpX homolog.